The sequence spans 1403 residues: DNA-directed RNA polymerase subunit beta' (1403 aa).

4 residues coordinate Zn(2+): cysteine 71, cysteine 73, cysteine 86, and cysteine 89. Mg(2+)-binding residues include aspartate 462, aspartate 464, and aspartate 466. 4 residues coordinate Zn(2+): cysteine 811, cysteine 885, cysteine 892, and cysteine 895.

The protein belongs to the RNA polymerase beta' chain family. The RNAP catalytic core consists of 2 alpha, 1 beta, 1 beta' and 1 omega subunit. When a sigma factor is associated with the core the holoenzyme is formed, which can initiate transcription. Mg(2+) serves as cofactor. The cofactor is Zn(2+).

The catalysed reaction is RNA(n) + a ribonucleoside 5'-triphosphate = RNA(n+1) + diphosphate. Functionally, DNA-dependent RNA polymerase catalyzes the transcription of DNA into RNA using the four ribonucleoside triphosphates as substrates. This chain is DNA-directed RNA polymerase subunit beta', found in Bartonella tribocorum (strain CIP 105476 / IBS 506).